We begin with the raw amino-acid sequence, 463 residues long: Metacaspase-1 (463 aa).

Residues 1–149 are disordered; it reads MSWNQYPGGG…PQLQGQGGQS (149 aa). Residues 7-18 are compositionally biased toward gly residues; that stretch reads PGGGHHQQGGYG. The span at 20-56 shows a compositional bias: pro residues; it reads RPPPPQWAQQGPPPPPNMGYRPPPPPQAYYNNPPPPQ. Over residues 57 to 83 the composition is skewed to low complexity; sequence QYQRPAPQQNGYQQGGYQQQQQSQGNY. Catalysis depends on residues histidine 247 and cysteine 309.

This sequence belongs to the peptidase C14B family.

Involved in cell death (apoptosis). This is Metacaspase-1 (MCA1) from Cryptococcus neoformans var. neoformans serotype D (strain B-3501A) (Filobasidiella neoformans).